A 215-amino-acid polypeptide reads, in one-letter code: N-(5'-phosphoribosyl)anthranilate isomerase (215 aa).

Belongs to the TrpF family.

It carries out the reaction N-(5-phospho-beta-D-ribosyl)anthranilate = 1-(2-carboxyphenylamino)-1-deoxy-D-ribulose 5-phosphate. The protein operates within amino-acid biosynthesis; L-tryptophan biosynthesis; L-tryptophan from chorismate: step 3/5. The protein is N-(5'-phosphoribosyl)anthranilate isomerase of Ruegeria sp. (strain TM1040) (Silicibacter sp.).